An 805-amino-acid polypeptide reads, in one-letter code: Phenylalanine--tRNA ligase beta subunit (805 aa).

Residues 39–148 (APPFTGVVVT…AALRPGTDIR (110 aa)) form the tRNA-binding domain. The B5 domain occupies 399–474 (PVREPVRMRL…RVYGFERIPD (76 aa)). 4 residues coordinate Mg(2+): Asp452, Asp458, Glu461, and Glu462. Residues 703–804 (SRQPVVVRDL…LVAAHNARQR (102 aa)) form the FDX-ACB domain.

This sequence belongs to the phenylalanyl-tRNA synthetase beta subunit family. Type 1 subfamily. As to quaternary structure, tetramer of two alpha and two beta subunits. Mg(2+) serves as cofactor.

The protein localises to the cytoplasm. The catalysed reaction is tRNA(Phe) + L-phenylalanine + ATP = L-phenylalanyl-tRNA(Phe) + AMP + diphosphate + H(+). The sequence is that of Phenylalanine--tRNA ligase beta subunit from Bordetella pertussis (strain Tohama I / ATCC BAA-589 / NCTC 13251).